We begin with the raw amino-acid sequence, 207 residues long: Ribosomal RNA small subunit methyltransferase G (207 aa).

S-adenosyl-L-methionine is bound by residues glycine 73, leucine 78, 124 to 125 (VE), and arginine 139.

The protein belongs to the methyltransferase superfamily. RNA methyltransferase RsmG family.

The protein localises to the cytoplasm. The catalysed reaction is guanosine(527) in 16S rRNA + S-adenosyl-L-methionine = N(7)-methylguanosine(527) in 16S rRNA + S-adenosyl-L-homocysteine. Its function is as follows. Specifically methylates the N7 position of guanine in position 527 of 16S rRNA. This is Ribosomal RNA small subunit methyltransferase G from Shigella dysenteriae serotype 1 (strain Sd197).